A 152-amino-acid chain; its full sequence is UPF0735 ACT domain-containing protein SAS1579 (152 aa).

Residues 75–150 (TLILYVTDIV…YVSKVELISM (76 aa)) form the ACT domain.

This sequence belongs to the UPF0735 family.

The sequence is that of UPF0735 ACT domain-containing protein SAS1579 from Staphylococcus aureus (strain MSSA476).